We begin with the raw amino-acid sequence, 66 residues long: Photosystem II reaction center protein H (66 aa).

Residues 29 to 49 form a helical membrane-spanning segment; sequence PIMGLTMVLFLVFLLIILQIY.

Belongs to the PsbH family. PSII is composed of 1 copy each of membrane proteins PsbA, PsbB, PsbC, PsbD, PsbE, PsbF, PsbH, PsbI, PsbJ, PsbK, PsbL, PsbM, PsbT, PsbX, PsbY, PsbZ, Psb30/Ycf12, at least 3 peripheral proteins of the oxygen-evolving complex and a large number of cofactors. It forms dimeric complexes.

Its subcellular location is the plastid. It localises to the chloroplast thylakoid membrane. In terms of biological role, one of the components of the core complex of photosystem II (PSII), required for its stability and/or assembly. PSII is a light-driven water:plastoquinone oxidoreductase that uses light energy to abstract electrons from H(2)O, generating O(2) and a proton gradient subsequently used for ATP formation. It consists of a core antenna complex that captures photons, and an electron transfer chain that converts photonic excitation into a charge separation. The polypeptide is Photosystem II reaction center protein H (Thalassiosira pseudonana (Marine diatom)).